The sequence spans 100 residues: Large ribosomal subunit protein uL23 (100 aa).

The protein belongs to the universal ribosomal protein uL23 family. As to quaternary structure, part of the 50S ribosomal subunit. Contacts protein L29, and trigger factor when it is bound to the ribosome.

One of the early assembly proteins it binds 23S rRNA. One of the proteins that surrounds the polypeptide exit tunnel on the outside of the ribosome. Forms the main docking site for trigger factor binding to the ribosome. The sequence is that of Large ribosomal subunit protein uL23 from Vibrio atlanticus (strain LGP32) (Vibrio splendidus (strain Mel32)).